A 661-amino-acid polypeptide reads, in one-letter code: FAST kinase domain-containing protein 3, mitochondrial (661 aa).

One can recognise an RAP domain in the interval 592-650; it reads VALCIDGPQRFCLDSKHLLGKEATKQRHLRLLGYQVVQLPYHELELLTSRLELVDYLQR.

This sequence belongs to the FAST kinase family. In terms of tissue distribution, expression detected in spleen, testis, colon, heart, smooth muscle, kidney, brain, lung, liver, brown and white adipose tissue with highest expression in testis and smooth muscle.

Its subcellular location is the mitochondrion. In terms of biological role, required for normal mitochondrial respiration. Increases steady-state levels and half-lives of a subset of mature mitochondrial mRNAs MT-ND2, MT-ND3, MT-CYTB, MT-CO2, and MT-ATP8/6. Promotes MT-CO1 mRNA translation and increases mitochondrial complex IV assembly and activity. This chain is FAST kinase domain-containing protein 3, mitochondrial (Fastkd3), found in Mus musculus (Mouse).